Consider the following 331-residue polypeptide: Cytosolic 5'-nucleotidase 3A (331 aa).

The active-site Nucleophile is the Asp83. Residues Asp83 and Asp85 each coordinate Mg(2+). Asp85 functions as the Proton donor in the catalytic mechanism. Residue Glu130 participates in CMP binding. Residues Glu130 and Ser151 each contribute to the N(7)-methyl-GMP site. Substrate contacts are provided by residues 198–200 and Lys247; that span reads SAG. Asp272 provides a ligand contact to Mg(2+). Phosphoserine is present on Ser273.

It belongs to the pyrimidine 5'-nucleotidase family. Monomer. As to expression, isoform 2 is highly expressed in the brain, heart, spleen, kidney and blood. Isoform 2 is expressed (at protein level) in the spleen, skeletal muscle and gastrointestinal epithelia.

The protein resides in the cytoplasm. It carries out the reaction N(7)-methyl-GMP + H2O = N(7)-methylguanosine + phosphate. The enzyme catalyses a ribonucleoside 5'-phosphate + H2O = a ribonucleoside + phosphate. Nucleotidase which shows specific activity towards cytidine monophosphate (CMP) and 7-methylguanosine monophosphate (m(7)GMP). CMP seems to be the preferred substrate. The protein is Cytosolic 5'-nucleotidase 3A (Nt5c3a) of Mus musculus (Mouse).